The following is a 1379-amino-acid chain: Partitioning defective protein 3 (1379 aa).

Residues 1 to 23 (MSASSTSSSSTSCPEGGEPSGSC) show a composition bias toward low complexity. Disordered regions lie at residues 1–32 (MSAS…GEST) and 208–335 (YNVG…SDRK). Polar residues-rich tracts occupy residues 239–256 (SFDQ…PKPS) and 272–284 (ILRS…ASGS). Basic and acidic residues-rich tracts occupy residues 302–315 (EVEK…ERKS) and 322–335 (DKNP…SDRK). PDZ domains lie at 381-483 (LVTF…IINR) and 515-599 (VVEL…SRVS). Residues 606 to 626 (TSASSENKENEETLKVVEEEK) are a coiled coil. The PDZ 3 domain occupies 659-750 (VIPFINGSSS…EVGMISSNVR (92 aa)). Disordered regions lie at residues 767–873 (DLSR…MGAA), 887–918 (HQRQ…RSPM), 949–1085 (QSME…GGNV), 1273–1301 (VEPV…SGSS), and 1350–1379 (AYET…FPQY). Composition is skewed to low complexity over residues 776-786 (SSPSPSSRMSS) and 798-826 (ATRG…AVPA). 2 stretches are compositionally biased toward basic and acidic residues: residues 828–844 (LTER…RNDE) and 854–869 (FNRE…EKRG). Residues 894–912 (PTSSTQKRSKSQPRSSSQR) show a composition bias toward low complexity. Residues 967-977 (QIPTGSSSKVQ) are compositionally biased toward polar residues. Basic and acidic residues-rich tracts occupy residues 1030–1040 (KSRDASPEKTP) and 1048–1060 (SVER…DERN). Over residues 1290–1301 (STSSGAVASGSS) the composition is skewed to low complexity.

The protein belongs to the PAR3 family. As to quaternary structure, required, together with pkc-3, for the localization of par-6; par-6 is involved in localizing/maintaining par-3 at the cell periphery. Interacts with par-6 and pkc-3 for localization at the periphery of anterior cortex of the embryo. Asymmetrically distributed at the periphery of the zygote and in dividing blastomeres of the germline lineage. Coexpressed with par-6; patchy expression observed at the periphery after completion of meiosis I and in meiosis II. On completion of metaphase II, expression is restricted to the anterior 85% of embryo length; this decreases to 55% in embryos between prophase and telophase of the first mitosis. During the first cleavage, expression is detected in the advancing furrow. Transiently coexpressed and colocalized asymmetrically with par-6 and pkc-3, in the developing somatic gonad, including the spermathecal precursor cells of L4 larvae.

It localises to the cytoplasm. Its function is as follows. In cooperation with pkc-3, required for establishing cell polarity and regulating spindle orientation in the early embryo. Localization is crucial for recruiting par-6 and pkc-3 to the peripheral apical cortex and restricting par-2 to basolateral surfaces. Necessary for apicobasal and anterior-posterior asymmetries associated with cell adhesion and gastrulation during the first few cycles of embryogenesis, and also for epithelial cell polarity in the distal spermatheca. Regulates the asymmetric localization of csnk-1, ppk-1 and gpr-1/2 during the first embryonic division. The polypeptide is Partitioning defective protein 3 (Caenorhabditis elegans).